Reading from the N-terminus, the 188-residue chain is Elongation factor P-like protein (188 aa).

This sequence belongs to the elongation factor P family.

This Xanthomonas axonopodis pv. citri (strain 306) protein is Elongation factor P-like protein.